A 401-amino-acid chain; its full sequence is 3-hydroxyisobutyryl-CoA hydrolase-like protein 1, mitochondrial (401 aa).

The transit peptide at 1-26 directs the protein to the mitochondrion; that stretch reads MHNAKGLLGRIVRDKLWRFGYRRSLC.

It belongs to the enoyl-CoA hydratase/isomerase family.

Its subcellular location is the mitochondrion. This chain is 3-hydroxyisobutyryl-CoA hydrolase-like protein 1, mitochondrial, found in Arabidopsis thaliana (Mouse-ear cress).